A 140-amino-acid polypeptide reads, in one-letter code: Small ribosomal subunit protein uS19 (140 aa).

The protein belongs to the universal ribosomal protein uS19 family.

Its function is as follows. Protein S19 forms a complex with S13 that binds strongly to the 16S ribosomal RNA. This chain is Small ribosomal subunit protein uS19, found in Natronomonas pharaonis (strain ATCC 35678 / DSM 2160 / CIP 103997 / JCM 8858 / NBRC 14720 / NCIMB 2260 / Gabara) (Halobacterium pharaonis).